The following is a 423-amino-acid chain: COP9 signalosome complex subunit 3 (423 aa).

Residue Ala-2 is modified to N-acetylalanine. The region spanning 197–365 (NFERALYFYE…GMVSFHDNPE (169 aa)) is the PCI domain. The tract at residues 402-423 (QFVQKSMGSQEDDSGNKPSSYS) is disordered. Ser-407, Ser-410, and Ser-423 each carry phosphoserine.

The protein belongs to the CSN3 family. As to quaternary structure, component of the CSN complex, composed of COPS1/GPS1, COPS2, COPS3, COPS4, COPS5, COPS6, COPS7 (COPS7A or COPS7B), COPS8 and COPS9. In the complex, it probably interacts directly with COPS1, COPS4, COPS8 and COPS9. Interacts with CK2 and PKD. Interacts with the translation initiation factor EIF3S6 and IKBKG. Interacts with ERCC6.

It is found in the cytoplasm. Its subcellular location is the nucleus. Its function is as follows. Component of the COP9 signalosome complex (CSN), a complex involved in various cellular and developmental processes. The CSN complex is an essential regulator of the ubiquitin (Ubl) conjugation pathway by mediating the deneddylation of the cullin subunits of SCF-type E3 ligase complexes, leading to decrease the Ubl ligase activity of SCF-type complexes such as SCF, CSA or DDB2. The complex is also involved in phosphorylation of p53/TP53, c-jun/JUN, IkappaBalpha/NFKBIA, ITPK1 and IRF8/ICSBP, possibly via its association with CK2 and PKD kinases. CSN-dependent phosphorylation of TP53 and JUN promotes and protects degradation by the Ubl system, respectively. Essential to maintain the survival of epiblast cells and thus the development of the postimplantation embryo. In Rattus norvegicus (Rat), this protein is COP9 signalosome complex subunit 3 (Cops3).